The sequence spans 412 residues: Glutamyl-tRNA reductase (412 aa).

Substrate is bound by residues 52–55, S108, 113–115, and Q119; these read TCNR and EYE. C53 serves as the catalytic Nucleophile. An NADP(+)-binding site is contributed by 189-194; the sequence is GAGEIG.

Belongs to the glutamyl-tRNA reductase family. As to quaternary structure, homodimer.

The catalysed reaction is (S)-4-amino-5-oxopentanoate + tRNA(Glu) + NADP(+) = L-glutamyl-tRNA(Glu) + NADPH + H(+). Its pathway is porphyrin-containing compound metabolism; protoporphyrin-IX biosynthesis; 5-aminolevulinate from L-glutamyl-tRNA(Glu): step 1/2. Functionally, catalyzes the NADPH-dependent reduction of glutamyl-tRNA(Glu) to glutamate 1-semialdehyde (GSA). This chain is Glutamyl-tRNA reductase, found in Sulfurisphaera tokodaii (strain DSM 16993 / JCM 10545 / NBRC 100140 / 7) (Sulfolobus tokodaii).